The following is a 322-amino-acid chain: Ribonucleoside-diphosphate reductase subunit beta nrdF1 (322 aa).

Fe cation contacts are provided by Asp70, Glu101, and His104. Tyr108 is a catalytic residue. Fe cation is bound by residues Glu161, Glu195, and His198.

Belongs to the ribonucleoside diphosphate reductase small chain family. As to quaternary structure, tetramer of two alpha and two beta subunits. Fe cation serves as cofactor.

The catalysed reaction is a 2'-deoxyribonucleoside 5'-diphosphate + [thioredoxin]-disulfide + H2O = a ribonucleoside 5'-diphosphate + [thioredoxin]-dithiol. Functionally, provides the precursors necessary for DNA synthesis. Catalyzes the biosynthesis of deoxyribonucleotides from the corresponding ribonucleotides. This is Ribonucleoside-diphosphate reductase subunit beta nrdF1 (nrdF1) from Mycobacterium tuberculosis (strain CDC 1551 / Oshkosh).